A 279-amino-acid chain; its full sequence is DNA repair protein RecO (279 aa).

The protein belongs to the RecO family.

Involved in DNA repair and RecF pathway recombination. The sequence is that of DNA repair protein RecO from Thermosynechococcus vestitus (strain NIES-2133 / IAM M-273 / BP-1).